Here is a 310-residue protein sequence, read N- to C-terminus: uncharacterized protein (310 aa).

At methionine 1–alanine 6 the chain is on the cytoplasmic side. The PQ-loop 1 domain maps to lysine 5–glutamine 69. The chain crosses the membrane as a helical span at residues alanine 7–isoleucine 27. Residues tyrosine 28–threonine 36 lie on the Extracellular side of the membrane. The chain crosses the membrane as a helical span at residues glycine 37–phenylalanine 57. The Cytoplasmic segment spans residues cysteine 58 to lysine 61. The helical transmembrane segment at glycine 62 to valine 82 threads the bilayer. Residues glutamine 83–lysine 96 lie on the Extracellular side of the membrane. Residues isoleucine 97–leucine 117 traverse the membrane as a helical segment. Over tryptophan 118–aspartate 131 the chain is Cytoplasmic. The helical transmembrane segment at leucine 132–glutamate 152 threads the bilayer. The PQ-loop 2 domain maps to alanine 138 to leucine 194. Over leucine 153–asparagine 164 the chain is Extracellular. Residues phenylalanine 165–glycine 185 form a helical membrane-spanning segment. Topologically, residues asparagine 186 to glycine 191 are cytoplasmic. Residues isoleucine 192 to tryptophan 212 form a helical membrane-spanning segment. The Extracellular segment spans residues tryptophan 213 to valine 310. A Phosphoserine modification is found at serine 229. N-linked (GlcNAc...) asparagine glycans are attached at residues asparagine 251 and asparagine 259.

The protein localises to the cell membrane. This is an uncharacterized protein from Saccharomyces cerevisiae (strain ATCC 204508 / S288c) (Baker's yeast).